Reading from the N-terminus, the 330-residue chain is ADP-L-glycero-D-manno-heptose-6-epimerase (330 aa).

NADP(+) is bound by residues 11–12, 32–33, Gln39, Gln54, 75–79, and Asn92; these read FI, DD, and QGACA. Residue Tyr139 is the Proton acceptor of the active site. Residue Lys143 coordinates NADP(+). Asn168 is a binding site for substrate. Positions 169 and 177 each coordinate NADP(+). Lys177 serves as the catalytic Proton acceptor. Substrate-binding positions include Arg179, His186, 200–203, Arg213, and Tyr292; that span reads FGEH.

The protein belongs to the NAD(P)-dependent epimerase/dehydratase family. HldD subfamily. In terms of assembly, homopentamer. The cofactor is NADP(+).

It catalyses the reaction ADP-D-glycero-beta-D-manno-heptose = ADP-L-glycero-beta-D-manno-heptose. The protein operates within nucleotide-sugar biosynthesis; ADP-L-glycero-beta-D-manno-heptose biosynthesis; ADP-L-glycero-beta-D-manno-heptose from D-glycero-beta-D-manno-heptose 7-phosphate: step 4/4. In terms of biological role, catalyzes the interconversion between ADP-D-glycero-beta-D-manno-heptose and ADP-L-glycero-beta-D-manno-heptose via an epimerization at carbon 6 of the heptose. In Pseudomonas paraeruginosa (strain DSM 24068 / PA7) (Pseudomonas aeruginosa (strain PA7)), this protein is ADP-L-glycero-D-manno-heptose-6-epimerase.